The chain runs to 162 residues: Protein A49R (162 aa).

It belongs to the poxviridae A49 protein family. In terms of assembly, interacts with host BTRC; this interaction inhibits NF-kappa-B activation.

It is found in the host cytoplasm. The protein localises to the host nucleus. In terms of biological role, plays a role in the inhibition of host NF-kappa-B activation. Interacts with host BTRC and thereby diminishes ubiquitination of NF-kappa-B inhibitor alpha/NFKBIA. This stabilizes NFKBIA and its interaction with NF-kappaB, so retaining p65/RELA in the cytoplasm and preventing NF-kappa-B-dependent gene expression. The chain is Protein A49R from Bos taurus (Bovine).